A 297-amino-acid polypeptide reads, in one-letter code: Cyclin-dependent kinase 1 (297 aa).

Methionine 1 is modified (N-acetylmethionine). Tyrosine 4 is subject to Phosphotyrosine; by PKR. One can recognise a Protein kinase domain in the interval 4 to 287 (YTKIEKIGEG…GKMALNHPYF (284 aa)). An N6-acetyllysine; alternate mark is found at lysine 6 and lysine 9. Glycyl lysine isopeptide (Lys-Gly) (interchain with G-Cter in SUMO2); alternate cross-links involve residues lysine 6 and lysine 9. 10-18 (IGEGTYGVV) contacts ATP. Threonine 14 carries the phosphothreonine; by PKMYT1 modification. Residue tyrosine 15 is modified to Phosphotyrosine; by PKMYT1, WEE1, WEE2 and PKC/PRKCD. Tyrosine 19 is modified (phosphotyrosine). Residue lysine 20 forms a Glycyl lysine isopeptide (Lys-Gly) (interchain with G-Cter in SUMO2) linkage. An ATP-binding site is contributed by lysine 33. Residue serine 39 is modified to Phosphoserine. At tyrosine 77 the chain carries Phosphotyrosine. Aspartate 128 functions as the Proton acceptor in the catalytic mechanism. A Glycyl lysine isopeptide (Lys-Gly) (interchain with G-Cter in SUMO2) cross-link involves residue lysine 139. A Phosphothreonine modification is found at threonine 141. Position 161 is a phosphothreonine; by CAK (threonine 161). The residue at position 178 (serine 178) is a Phosphoserine. Threonine 222 bears the Phosphothreonine mark. Lysine 245 is modified (N6-succinyllysine). Serine 248 is modified (phosphoserine).

The protein belongs to the protein kinase superfamily. CMGC Ser/Thr protein kinase family. CDC2/CDKX subfamily. As to quaternary structure, forms a stable but non-covalent complex with a regulatory subunit and with a cyclin. The cyclin subunit imparts substrate specificity to the complex. Interacts with cyclins-B (CCNB1, CCNB2 and CCNB3) to form a serine/threonine kinase holoenzyme complex also known as maturation promoting factor (MPF). Promotes G2-M transition when in complex with a cyclin-B. Can also form CDK1-cylin-D and CDK1-cyclin-E complexes that phosphorylate RB1 in vitro. Associates with cyclins-A and B1 during S-phase in regenerating hepatocytes. Interacts with DLGAP5. Binds to the CDK inhibitors CDKN1A/p21 and CDKN1B/p27. Interacts with catalytically active CCNB1 and RALBP1 during mitosis to form an endocytotic complex during interphase. Interacts with FANCC. Interacts with CEP63; this interaction recruits CDK1 to centrosomes. Interacts with CENPA. Interacts with NR1D1. Interacts with proteasome subunit PSMA8; to participate in meiosis progression during spermatogenesis. Unable to complex with cyclin-B1 and also fails to bind to CDKN1A/p21. In terms of assembly, (Microbial infection) Interacts with severe fever with thrombocytopenia syndrome virus (SFTSV) NSs; this interaction is inclusion body dependent, it inhibits the formation and nuclear import of the cyclin B1-CDK1 complex and leads to cell cycle arrest. In terms of processing, phosphorylation at Thr-161 by CAK/CDK7 activates kinase activity. Phosphorylation at Thr-14 and Tyr-15 by PKMYT1 prevents nuclear translocation. Phosphorylation at Tyr-15 by WEE1 and WEE2 inhibits the protein kinase activity and acts as a negative regulator of entry into mitosis (G2 to M transition). Phosphorylation by PKMYT1 and WEE1 takes place during mitosis to keep CDK1-cyclin-B complexes inactive until the end of G2. By the end of G2, PKMYT1 and WEE1 are inactivated, but CDC25A and CDC25B are activated. Dephosphorylation by active CDC25A and CDC25B at Thr-14 and Tyr-15, leads to CDK1 activation at the G2-M transition. Phosphorylation at Tyr-15 by WEE2 during oogenesis is required to maintain meiotic arrest in oocytes during the germinal vesicle (GV) stage, a long period of quiescence at dictyate prophase I, leading to prevent meiotic reentry. Phosphorylation by WEE2 is also required for metaphase II exit during egg activation to ensure exit from meiosis in oocytes and promote pronuclear formation. Phosphorylated at Tyr-4 by PKR/EIF2AK2 upon genotoxic stress. This phosphorylation triggers CDK1 polyubiquitination and subsequent proteolysis, thus leading to G2 arrest. In response to UV irradiation, phosphorylation at Tyr-15 by PRKCD activates the G2/M DNA damage checkpoint. Polyubiquitinated upon genotoxic stress. In terms of tissue distribution, found in breast cancer tissues.

The protein localises to the nucleus. The protein resides in the cytoplasm. It is found in the mitochondrion. Its subcellular location is the cytoskeleton. It localises to the microtubule organizing center. The protein localises to the centrosome. The protein resides in the spindle. It carries out the reaction L-seryl-[protein] + ATP = O-phospho-L-seryl-[protein] + ADP + H(+). The catalysed reaction is L-threonyl-[protein] + ATP = O-phospho-L-threonyl-[protein] + ADP + H(+). The enzyme catalyses [DNA-directed RNA polymerase] + ATP = phospho-[DNA-directed RNA polymerase] + ADP + H(+). Its activity is regulated as follows. Phosphorylation at Thr-14 or Tyr-15 inactivates the enzyme, while phosphorylation at Thr-161 activates it. Activated through a multistep process; binding to cyclin-B is required for relocation of cyclin-kinase complexes to the nucleus, activated by CAK/CDK7-mediated phosphorylation on Thr-161, and CDC25-mediated dephosphorylation of inhibitory phosphorylation on Thr-14 and Tyr-15. Activity is restricted during S-phase in an ATR-dependent manner to prevent premature entry into G2. Repressed by the CDK inhibitors CDKN1A/p21 and CDKN1B/p27 during the G1 phase and by CDKN1A/p21 at the G1-S checkpoint upon DNA damage. Transient activation by rapid and transient dephosphorylation at Tyr-15 triggered by TGFB1. Inhibited by flavopiridol and derivatives, pyrimidine derivatives, pyridine derivatives, purine derivatives, staurosporine, paullones, oxoindoles, indazole analogs, indolin-2-ones, pyrazolo[3,4-b]pyridines, imidazo[1,2-a]pyridine (AZ703), thiazolinone analogs(RO-3306), thiazol urea, macrocyclic quinoxalin-2-one, pyrrolo[2,3-a]carbazole, pyrazolo[1,5-a]-1,3,5-triazine, pyrazolo[1,5-a]pyrimidine (Dinaciclib, SCH 727965), 2-(1-ethyl-2-hydroxyethylamino)-6-benzylamino-9-isopropylpurine (roscovitine), olomoucine, AG-024322, AT-7519, P276-00, R547/Ro-4584820 and SNS-032/BMS-387032. In terms of biological role, plays a key role in the control of the eukaryotic cell cycle by modulating the centrosome cycle as well as mitotic onset; promotes G2-M transition via association with multiple interphase cyclins. Phosphorylates PARVA/actopaxin, APC, AMPH, APC, BARD1, Bcl-xL/BCL2L1, BRCA2, CALD1, CASP8, CDC7, CDC20, CDC25A, CDC25C, CC2D1A, CENPA, CSNK2 proteins/CKII, FZR1/CDH1, CDK7, CEBPB, CHAMP1, DMD/dystrophin, EEF1 proteins/EF-1, EZH2, KIF11/EG5, EGFR, FANCG, FOS, GFAP, GOLGA2/GM130, GRASP1, UBE2A/hHR6A, HIST1H1 proteins/histone H1, HMGA1, HIVEP3/KRC, KAT5, LMNA, LMNB, LBR, MKI67, LATS1, MAP1B, MAP4, MARCKS, MCM2, MCM4, MKLP1, MLST8, MYB, NEFH, NFIC, NPC/nuclear pore complex, PITPNM1/NIR2, NPM1, NCL, NUCKS1, NPM1/numatrin, ORC1, PRKAR2A, EEF1E1/p18, EIF3F/p47, p53/TP53, NONO/p54NRB, PAPOLA, PLEC/plectin, RB1, TPPP, UL40/R2, RAB4A, RAP1GAP, RBBP8/CtIP, RCC1, RPS6KB1/S6K1, KHDRBS1/SAM68, ESPL1, SKI, BIRC5/survivin, STIP1, TEX14, beta-tubulins, MAPT/TAU, NEDD1, VIM/vimentin, TK1, FOXO1, RUNX1/AML1, SAMHD1, SIRT2, CGAS and RUNX2. CDK1/CDC2-cyclin-B controls pronuclear union in interphase fertilized eggs. Essential for early stages of embryonic development. During G2 and early mitosis, CDC25A/B/C-mediated dephosphorylation activates CDK1/cyclin complexes which phosphorylate several substrates that trigger at least centrosome separation, Golgi dynamics, nuclear envelope breakdown and chromosome condensation. Once chromosomes are condensed and aligned at the metaphase plate, CDK1 activity is switched off by WEE1- and PKMYT1-mediated phosphorylation to allow sister chromatid separation, chromosome decondensation, reformation of the nuclear envelope and cytokinesis. Phosphorylates KRT5 during prometaphase and metaphase. Inactivated by PKR/EIF2AK2- and WEE1-mediated phosphorylation upon DNA damage to stop cell cycle and genome replication at the G2 checkpoint thus facilitating DNA repair. Reactivated after successful DNA repair through WIP1-dependent signaling leading to CDC25A/B/C-mediated dephosphorylation and restoring cell cycle progression. Catalyzes lamin (LMNA, LMNB1 and LMNB2) phosphorylation at the onset of mitosis, promoting nuclear envelope breakdown. In proliferating cells, CDK1-mediated FOXO1 phosphorylation at the G2-M phase represses FOXO1 interaction with 14-3-3 proteins and thereby promotes FOXO1 nuclear accumulation and transcription factor activity, leading to cell death of postmitotic neurons. The phosphorylation of beta-tubulins regulates microtubule dynamics during mitosis. NEDD1 phosphorylation promotes PLK1-mediated NEDD1 phosphorylation and subsequent targeting of the gamma-tubulin ring complex (gTuRC) to the centrosome, an important step for spindle formation. In addition, CC2D1A phosphorylation regulates CC2D1A spindle pole localization and association with SCC1/RAD21 and centriole cohesion during mitosis. The phosphorylation of Bcl-xL/BCL2L1 after prolongated G2 arrest upon DNA damage triggers apoptosis. In contrast, CASP8 phosphorylation during mitosis prevents its activation by proteolysis and subsequent apoptosis. This phosphorylation occurs in cancer cell lines, as well as in primary breast tissues and lymphocytes. EZH2 phosphorylation promotes H3K27me3 maintenance and epigenetic gene silencing. CALD1 phosphorylation promotes Schwann cell migration during peripheral nerve regeneration. CDK1-cyclin-B complex phosphorylates NCKAP5L and mediates its dissociation from centrosomes during mitosis. Regulates the amplitude of the cyclic expression of the core clock gene BMAL1 by phosphorylating its transcriptional repressor NR1D1, and this phosphorylation is necessary for SCF(FBXW7)-mediated ubiquitination and proteasomal degradation of NR1D1. Phosphorylates EML3 at 'Thr-881' which is essential for its interaction with HAUS augmin-like complex and TUBG1. Phosphorylates CGAS during mitosis, leading to its inhibition, thereby preventing CGAS activation by self DNA during mitosis. Phosphorylates SKA3 on multiple sites during mitosis which promotes SKA3 binding to the NDC80 complex and anchoring of the SKA complex to kinetochores, to enable stable attachment of mitotic spindle microtubules to kinetochores. (Microbial infection) Acts as a receptor for hepatitis C virus (HCV) in hepatocytes and facilitates its cell entry. In Homo sapiens (Human), this protein is Cyclin-dependent kinase 1 (CDK1).